The primary structure comprises 388 residues: N5-carboxyaminoimidazole ribonucleotide synthase (388 aa).

ATP-binding positions include Lys105, Lys140, 174-177, Glu182, and 267-268; these read ESFV and NE. In terms of domain architecture, ATP-grasp spans 109 to 297; that stretch reads RHFLQNLGLP…QFALQLQAVT (189 aa).

Belongs to the PurK/PurT family. As to quaternary structure, homodimer.

It catalyses the reaction 5-amino-1-(5-phospho-beta-D-ribosyl)imidazole + hydrogencarbonate + ATP = 5-carboxyamino-1-(5-phospho-D-ribosyl)imidazole + ADP + phosphate + 2 H(+). It participates in purine metabolism; IMP biosynthesis via de novo pathway; 5-amino-1-(5-phospho-D-ribosyl)imidazole-4-carboxylate from 5-amino-1-(5-phospho-D-ribosyl)imidazole (N5-CAIR route): step 1/2. Its function is as follows. Catalyzes the ATP-dependent conversion of 5-aminoimidazole ribonucleotide (AIR) and HCO(3)(-) to N5-carboxyaminoimidazole ribonucleotide (N5-CAIR). The chain is N5-carboxyaminoimidazole ribonucleotide synthase from Synechocystis sp. (strain ATCC 27184 / PCC 6803 / Kazusa).